The sequence spans 301 residues: Glycine--tRNA ligase alpha subunit (301 aa).

The protein belongs to the class-II aminoacyl-tRNA synthetase family. As to quaternary structure, tetramer of two alpha and two beta subunits.

It localises to the cytoplasm. It carries out the reaction tRNA(Gly) + glycine + ATP = glycyl-tRNA(Gly) + AMP + diphosphate. This chain is Glycine--tRNA ligase alpha subunit, found in Shewanella denitrificans (strain OS217 / ATCC BAA-1090 / DSM 15013).